A 750-amino-acid polypeptide reads, in one-letter code: Alpha-galactosidase C (750 aa).

Residues 1–26 (MFRSTATVAAATAMGLLTATGHGSLA) form the signal peptide. Asn58, Asn162, Asn186, Asn194, Asn366, Asn428, Asn432, and Asn453 each carry an N-linked (GlcNAc...) asparagine glycan. Asp511 serves as the catalytic Nucleophile. The active-site Proton donor is the Asp573.

This sequence belongs to the glycosyl hydrolase 36 family. In terms of assembly, homotetramer. Requires Mg(2+) as cofactor. It depends on NAD(+) as a cofactor.

It localises to the secreted. It catalyses the reaction Hydrolysis of terminal, non-reducing alpha-D-galactose residues in alpha-D-galactosides, including galactose oligosaccharides, galactomannans and galactolipids.. Its function is as follows. Hydrolyzes a variety of simple alpha-D-galactoside as well as more complex molecules such as oligosaccharides and polysaccharides. Active on paranitrophenyl-alpha-galactoside, raffinose, locust bean gum and gum guar. The polypeptide is Alpha-galactosidase C (aglC) (Emericella nidulans (strain FGSC A4 / ATCC 38163 / CBS 112.46 / NRRL 194 / M139) (Aspergillus nidulans)).